We begin with the raw amino-acid sequence, 292 residues long: Glycine-rich RNA-binding protein RZ1B (292 aa).

One can recognise an RRM domain in the interval 12–90; sequence SRIFVGGLSW…KVISVNKAEP (79 aa). S20 carries the phosphoserine modification. A disordered region spans residues 93-114; that stretch reads GGEDVDQLKKGGGYSSRGKGTE. The CCHC-type zinc finger occupies 117 to 132; sequence CFKCRRPGHWARDCPS. 2 stretches are compositionally biased toward basic and acidic residues: residues 180–210 and 220–268; these read DGRR…HYPF and FVSD…EGRP. The interval 180-292 is disordered; sequence DGRRDRDGGR…GGRPSSYERW (113 aa).

In terms of tissue distribution, expressed in roots, rosette and cauline leaves, stems, floral buds and flowers.

It localises to the nucleus. Binds RNA and DNA sequences non-specifically. May be involved in tolerance to cold stress. This chain is Glycine-rich RNA-binding protein RZ1B, found in Arabidopsis thaliana (Mouse-ear cress).